The sequence spans 283 residues: Protein/nucleic acid deglycase HchA (283 aa).

Positions 86, 91, and 123 each coordinate Zn(2+). The Nucleophile role is filled by cysteine 185.

It belongs to the peptidase C56 family. HchA subfamily. In terms of assembly, homodimer.

It localises to the cytoplasm. It carries out the reaction N(omega)-(1-hydroxy-2-oxopropyl)-L-arginyl-[protein] + H2O = lactate + L-arginyl-[protein] + H(+). The catalysed reaction is N(6)-(1-hydroxy-2-oxopropyl)-L-lysyl-[protein] + H2O = lactate + L-lysyl-[protein] + H(+). The enzyme catalyses S-(1-hydroxy-2-oxopropyl)-L-cysteinyl-[protein] + H2O = lactate + L-cysteinyl-[protein] + H(+). It catalyses the reaction N(omega)-(1-hydroxy-2-oxoethyl)-L-arginyl-[protein] + H2O = L-arginyl-[protein] + glycolate + H(+). It carries out the reaction N(6)-(1-hydroxy-2-oxoethyl)-L-lysyl-[protein] + H2O = glycolate + L-lysyl-[protein] + H(+). The catalysed reaction is S-(1-hydroxy-2-oxoethyl)-L-cysteinyl-[protein] + H2O = glycolate + L-cysteinyl-[protein] + H(+). The enzyme catalyses N(2)-(1-hydroxy-2-oxopropyl)-dGTP + H2O = lactate + dGTP + H(+). It catalyses the reaction N(2)-(1-hydroxy-2-oxopropyl)-GTP + H2O = lactate + GTP + H(+). It carries out the reaction N(2)-(1-hydroxy-2-oxopropyl)-GDP + H2O = lactate + GDP + H(+). The catalysed reaction is N(2)-(1-hydroxy-2-oxopropyl)-GMP + H2O = lactate + GMP + H(+). The enzyme catalyses N(2)-(1-hydroxy-2-oxoethyl)-dGTP + H2O = dGTP + glycolate + H(+). It catalyses the reaction N(2)-(1-hydroxy-2-oxoethyl)-GTP + H2O = glycolate + GTP + H(+). It carries out the reaction N(2)-(1-hydroxy-2-oxoethyl)-GDP + H2O = glycolate + GDP + H(+). The catalysed reaction is N(2)-(1-hydroxy-2-oxoethyl)-GMP + H2O = glycolate + GMP + H(+). The enzyme catalyses an N(2)-(1-hydroxy-2-oxopropyl)-guanosine in RNA + H2O = a guanosine in RNA + lactate + H(+). It catalyses the reaction an N(2)-(1-hydroxy-2-oxopropyl)-2'-deoxyguanosine in DNA + H2O = a 2'-deoxyguanosine in DNA + lactate + H(+). It carries out the reaction an N(2)-(1-hydroxy-2-oxoethyl)-guanosine in RNA + H2O = a guanosine in RNA + glycolate + H(+). The catalysed reaction is an N(2)-(1-hydroxy-2-oxoethyl)-2'-deoxyguanosine in DNA + H2O = a 2'-deoxyguanosine in DNA + glycolate + H(+). In terms of biological role, protein and nucleotide deglycase that catalyzes the deglycation of the Maillard adducts formed between amino groups of proteins or nucleotides and reactive carbonyl groups of glyoxals. Thus, functions as a protein deglycase that repairs methylglyoxal- and glyoxal-glycated proteins, and releases repaired proteins and lactate or glycolate, respectively. Deglycates cysteine, arginine and lysine residues in proteins, and thus reactivates these proteins by reversing glycation by glyoxals. Acts on early glycation intermediates (hemithioacetals and aminocarbinols), preventing the formation of Schiff bases and advanced glycation endproducts (AGE). Also functions as a nucleotide deglycase able to repair glycated guanine in the free nucleotide pool (GTP, GDP, GMP, dGTP) and in DNA and RNA. Is thus involved in a major nucleotide repair system named guanine glycation repair (GG repair), dedicated to reversing methylglyoxal and glyoxal damage via nucleotide sanitization and direct nucleic acid repair. Plays an important role in protecting cells from carbonyl stress. The sequence is that of Protein/nucleic acid deglycase HchA from Escherichia coli O7:K1 (strain IAI39 / ExPEC).